The sequence spans 924 residues: Inositol polyphosphate 4-phosphatase type II (924 aa).

Positions 1-13 (MEIKEEGASEEGQ) are enriched in basic and acidic residues. 3 disordered regions span residues 1–24 (MEIK…ANDP), 481–516 (ILKK…HSDY), and 546–570 (DGGS…AIPS). The region spanning 23-165 (DPGDCQFTSI…LKSKEQLLVL (143 aa)) is the C2 domain.

It belongs to the inositol 3,4-bisphosphate 4-phosphatase family. As to expression, widely expressed with highest levels occurring in the skeletal muscle and heart.

It catalyses the reaction a 1,2-diacyl-sn-glycero-3-phospho-(1D-myo-inositol-3,4-bisphosphate) + H2O = a 1,2-diacyl-sn-glycero-3-phospho-(1D-myo-inositol-3-phosphate) + phosphate. It carries out the reaction 1D-myo-inositol 1,3,4-trisphosphate + H2O = 1D-myo-inositol 1,3-bisphosphate + phosphate. The enzyme catalyses 1D-myo-inositol 3,4-bisphosphate + H2O = 1D-myo-inositol 3-phosphate + phosphate. The protein operates within signal transduction; phosphatidylinositol signaling pathway. Its activity is regulated as follows. Strongly inhibited by inositol hexakisphosphate. Functionally, catalyzes the hydrolysis of the 4-position phosphate of phosphatidylinositol 3,4-bisphosphate, inositol 1,3,4-trisphosphate and inositol 3,4-trisphosphate. Plays a role in the late stages of macropinocytosis by dephosphorylating phosphatidylinositol 3,4-bisphosphate in membrane ruffles. The lipid phosphatase activity is critical for tumor suppressor function. Antagonizes the PI3K-AKT/PKB signaling pathway by dephosphorylating phosphoinositides and thereby modulating cell cycle progression and cell survival. The sequence is that of Inositol polyphosphate 4-phosphatase type II (INPP4B) from Homo sapiens (Human).